We begin with the raw amino-acid sequence, 315 residues long: MTSRTPTTVPCLLGPTASGKTAAALALAARHPVEIISVDSALVYREMDIGTAKPTAEERAVAPHHLIDIVDPTDSYSAAQFRADTLRLTGEIHARGRLPLLVGGTMLYYKALTQGLNDLPAADADLRATLDADAAREGWPAMHARLAAVDPVTAARLAPNDSQRIQRALEVFMLTGQAMSALLAAPARVDDAAAAWRFVPVALEPSDRGVLHARIEKRFDAMLANGFVDEVVKLRERGDLSPEMPSMRCVGYRQVWEYLDGAVDYSTMRDKGVFATRQLCKRQLTWLRSMTERVVVDCCDPHATARVLEAIEALL.

14–21 is a binding site for ATP; it reads GPTASGKT. Residue 16 to 21 participates in substrate binding; the sequence is TASGKT. Interaction with substrate tRNA stretches follow at residues 39–42, 163–167, and 248–253; these read DSAL, QRIQR, and RCVGYR.

It belongs to the IPP transferase family. Monomer. Mg(2+) is required as a cofactor.

It carries out the reaction adenosine(37) in tRNA + dimethylallyl diphosphate = N(6)-dimethylallyladenosine(37) in tRNA + diphosphate. Functionally, catalyzes the transfer of a dimethylallyl group onto the adenine at position 37 in tRNAs that read codons beginning with uridine, leading to the formation of N6-(dimethylallyl)adenosine (i(6)A). The sequence is that of tRNA dimethylallyltransferase from Paraburkholderia xenovorans (strain LB400).